Reading from the N-terminus, the 876-residue chain is GRB2-associated and regulator of MAPK protein (876 aa).

Residues 12 to 320 are CABIT; that stretch reads KDVKWSPVAM…HQVKGDMWPE (309 aa). The residue at position 105 (Tyr105) is a Phosphotyrosine. Residues 427–448 form a disordered region; sequence GDSGSDYLFPEANEESAGIPGK. Position 453 is a phosphotyrosine (Tyr453). Disordered stretches follow at residues 460–501 and 530–572; these read EGKP…ATLG and LNAP…SYYS. The tract at residues 498–550 is necessary for interaction with GRB2; that stretch reads ATLGATIKSSEIALPPPPVPPKSEAVREECRLLNAPPVPPRSAKPLSTSPSIP. Positions 560–572 are enriched in polar residues; the sequence is QTRSPSPTLSYYS. Ser609 and Ser613 each carry phosphoserine. Polar residues-rich tracts occupy residues 630–639 and 647–657; these read SGASENQTRS and RSYSYPRQKTP. Disordered stretches follow at residues 630–664 and 722–759; these read SGAS…KRTC and CPAL…TAGS. Positions 811 to 876 constitute an SAM domain; that stretch reads LSIEEVSKSL…QFINGWRPKI (66 aa).

Belongs to the GAREM family. Interacts with EGFR. Interacts (via proline-rich domain and phosphorylated at Tyr-105 and Tyr-453) with GRB2 (via SH3 domains); the interaction occurs upon EGF stimulation. Interacts (phosphorylated at Tyr-453) with PTPN11; the interaction increases MAPK/ERK activity and does not affect the GRB2/SOS complex formation. On EGF stimulation, phosphorylated on Tyr-105 and Tyr-453.

Acts as an adapter protein that plays a role in intracellular signaling cascades triggered either by the cell surface activated epidermal growth factor receptor and/or cytoplasmic protein tyrosine kinases. Promotes activation of the MAPK/ERK signaling pathway. Plays a role in the regulation of cell proliferation. This Mus musculus (Mouse) protein is GRB2-associated and regulator of MAPK protein (Garem1).